A 156-amino-acid chain; its full sequence is ATP synthase subunit b (156 aa).

The helical transmembrane segment at 7-29 threads the bilayer; sequence LFAQMVVFLVLAWFTMKFVWPPL.

It belongs to the ATPase B chain family. As to quaternary structure, F-type ATPases have 2 components, F(1) - the catalytic core - and F(0) - the membrane proton channel. F(1) has five subunits: alpha(3), beta(3), gamma(1), delta(1), epsilon(1). F(0) has three main subunits: a(1), b(2) and c(10-14). The alpha and beta chains form an alternating ring which encloses part of the gamma chain. F(1) is attached to F(0) by a central stalk formed by the gamma and epsilon chains, while a peripheral stalk is formed by the delta and b chains.

Its subcellular location is the cell inner membrane. F(1)F(0) ATP synthase produces ATP from ADP in the presence of a proton or sodium gradient. F-type ATPases consist of two structural domains, F(1) containing the extramembraneous catalytic core and F(0) containing the membrane proton channel, linked together by a central stalk and a peripheral stalk. During catalysis, ATP synthesis in the catalytic domain of F(1) is coupled via a rotary mechanism of the central stalk subunits to proton translocation. Its function is as follows. Component of the F(0) channel, it forms part of the peripheral stalk, linking F(1) to F(0). This Burkholderia multivorans (strain ATCC 17616 / 249) protein is ATP synthase subunit b.